Reading from the N-terminus, the 357-residue chain is Maleylacetate reductase 1 (357 aa).

Belongs to the iron-containing alcohol dehydrogenase family.

The catalysed reaction is 3-oxoadipate + NAD(+) = maleylacetate + NADH + H(+). It catalyses the reaction 3-oxoadipate + NADP(+) = maleylacetate + NADPH + H(+). The protein operates within aromatic compound metabolism; 3-chlorocatechol degradation. Plays a major role in the degradation of chloroaromatic compounds by channeling maleylacetate and some of its substituted derivatives into the 3-oxoadipate pathway. This enzyme converts maleylacetate and 2-chloromaleylacetate with similar efficiencies. The chain is Maleylacetate reductase 1 (macA) from Rhodococcus opacus (Nocardia opaca).